Reading from the N-terminus, the 289-residue chain is Mitochondrial fission regulator 1-like (289 aa).

Thr-27 carries the phosphothreonine modification. Phosphoserine is present on residues Ser-38, Ser-100, Ser-107, Ser-221, Ser-222, Ser-235, Ser-258, and Ser-270.

It belongs to the MTFR1 family. Phosphorylated by AMPK. Upon stress, phosphorylation by AMPK is sufficient to induce mitochondrial fragmentation.

It localises to the mitochondrion outer membrane. Its function is as follows. Mitochondrial protein required for adaptation of miochondrial dynamics to metabolic changes. Regulates mitochondrial morphology at steady state and mediates AMPK-dependent stress-induced mitochondrial fragmentation via the control of OPA1 levels. This Bos taurus (Bovine) protein is Mitochondrial fission regulator 1-like (MTFR1L).